A 213-amino-acid chain; its full sequence is Orotate phosphoribosyltransferase (213 aa).

A 5-phospho-alpha-D-ribose 1-diphosphate-binding site is contributed by Lys-26. 34 to 35 (FF) is a binding site for orotate. Residues 72–73 (YK), Arg-98, Lys-99, Lys-102, His-104, and 123–131 (DDVISAGTS) each bind 5-phospho-alpha-D-ribose 1-diphosphate. The orotate site is built by Ser-127 and Arg-155.

The protein belongs to the purine/pyrimidine phosphoribosyltransferase family. PyrE subfamily. Homodimer. Mg(2+) serves as cofactor.

It catalyses the reaction orotidine 5'-phosphate + diphosphate = orotate + 5-phospho-alpha-D-ribose 1-diphosphate. The protein operates within pyrimidine metabolism; UMP biosynthesis via de novo pathway; UMP from orotate: step 1/2. Its function is as follows. Catalyzes the transfer of a ribosyl phosphate group from 5-phosphoribose 1-diphosphate to orotate, leading to the formation of orotidine monophosphate (OMP). This Neisseria meningitidis serogroup A / serotype 4A (strain DSM 15465 / Z2491) protein is Orotate phosphoribosyltransferase.